The sequence spans 444 residues: Exodeoxyribonuclease 7 large subunit (444 aa).

The protein belongs to the XseA family. As to quaternary structure, heterooligomer composed of large and small subunits.

It localises to the cytoplasm. It carries out the reaction Exonucleolytic cleavage in either 5'- to 3'- or 3'- to 5'-direction to yield nucleoside 5'-phosphates.. In terms of biological role, bidirectionally degrades single-stranded DNA into large acid-insoluble oligonucleotides, which are then degraded further into small acid-soluble oligonucleotides. The polypeptide is Exodeoxyribonuclease 7 large subunit (Pseudoalteromonas atlantica (strain T6c / ATCC BAA-1087)).